Reading from the N-terminus, the 333-residue chain is Biotin synthase (333 aa).

The Radical SAM core domain maps to 46–275; it reads YYGKKVKLNM…TKEIRISGGR (230 aa). [4Fe-4S] cluster-binding residues include Cys-64, Cys-68, and Cys-71. 4 residues coordinate [2Fe-2S] cluster: Cys-108, Cys-140, Cys-200, and Arg-270.

Belongs to the radical SAM superfamily. Biotin synthase family. As to quaternary structure, homodimer. [4Fe-4S] cluster serves as cofactor. The cofactor is [2Fe-2S] cluster.

It carries out the reaction (4R,5S)-dethiobiotin + (sulfur carrier)-SH + 2 reduced [2Fe-2S]-[ferredoxin] + 2 S-adenosyl-L-methionine = (sulfur carrier)-H + biotin + 2 5'-deoxyadenosine + 2 L-methionine + 2 oxidized [2Fe-2S]-[ferredoxin]. Its pathway is cofactor biosynthesis; biotin biosynthesis; biotin from 7,8-diaminononanoate: step 2/2. In terms of biological role, catalyzes the conversion of dethiobiotin (DTB) to biotin by the insertion of a sulfur atom into dethiobiotin via a radical-based mechanism. In Halalkalibacterium halodurans (strain ATCC BAA-125 / DSM 18197 / FERM 7344 / JCM 9153 / C-125) (Bacillus halodurans), this protein is Biotin synthase.